The sequence spans 155 residues: MSTEKINLDIHKILTLLPHRYPILLVDRVLELEPHKGIKALKNVSINEPYFQGHFPKRPVMPGVLILEALAQAAALLTFSEEQPKDPENTLYYFVGIDGARFKRPVEPGDQLILNVTFERYIRGIWKFKAVAEVDGKVAAEAELMCTVKTTDVAP.

His-54 is a catalytic residue.

It belongs to the thioester dehydratase family. FabZ subfamily.

Its subcellular location is the cytoplasm. The catalysed reaction is a (3R)-hydroxyacyl-[ACP] = a (2E)-enoyl-[ACP] + H2O. Functionally, involved in unsaturated fatty acids biosynthesis. Catalyzes the dehydration of short chain beta-hydroxyacyl-ACPs and long chain saturated and unsaturated beta-hydroxyacyl-ACPs. This chain is 3-hydroxyacyl-[acyl-carrier-protein] dehydratase FabZ, found in Burkholderia lata (strain ATCC 17760 / DSM 23089 / LMG 22485 / NCIMB 9086 / R18194 / 383).